A 134-amino-acid chain; its full sequence is Translation initiation factor 2 subunit beta (134 aa).

The segment covering 1–12 (MEYDDMLDRAME) has biased composition (basic and acidic residues). Positions 1-28 (MEYDDMLDRAMEETPEIDGTSERFEVPD) are disordered.

Belongs to the eIF-2-beta/eIF-5 family. As to quaternary structure, heterotrimer composed of an alpha, a beta and a gamma chain.

Its function is as follows. eIF-2 functions in the early steps of protein synthesis by forming a ternary complex with GTP and initiator tRNA. The protein is Translation initiation factor 2 subunit beta of Haloarcula marismortui (strain ATCC 43049 / DSM 3752 / JCM 8966 / VKM B-1809) (Halobacterium marismortui).